The primary structure comprises 538 residues: ATP synthase subunit beta, mitochondrial (538 aa).

215–222 lines the ATP pocket; the sequence is GGAGVGKT.

It belongs to the ATPase alpha/beta chains family. In terms of assembly, subunit of the F-type ATPase which has 2 components, CF(1) - the catalytic core - and CF(0) - the membrane proton channel. Interacts (via N-terminus) with lov-1 (via PLAT domain). In terms of tissue distribution, expressed in three categories of adult male sensory neurons: tail ray B neurons, HOB hook neuron and head cephalic (CEM) neurons.

The protein resides in the cell projection. It localises to the cilium. The protein localises to the mitochondrion. It is found in the mitochondrion inner membrane. It carries out the reaction ATP + H2O + 4 H(+)(in) = ADP + phosphate + 5 H(+)(out). Functionally, mitochondrial membrane ATP synthase (F(1)F(0) ATP synthase or Complex V) produces ATP from ADP in the presence of a proton gradient across the membrane which is generated by electron transport complexes of the respiratory chain. F-type ATPases consist of two structural domains, F(1) - containing the extramembraneous catalytic core, and F(0) - containing the membrane proton channel, linked together by a central stalk and a peripheral stalk. During catalysis, ATP synthesis in the catalytic domain of F(1) is coupled via a rotary mechanism of the central stalk subunits to proton translocation. Subunits alpha and beta form the catalytic core in F(1). Rotation of the central stalk against the surrounding subunits leads to hydrolysis of ATP in three separate catalytic sites on the beta subunits. Required during male mating behavior for the response to hermaphrodite contact, acting with lov-1 and pkd-2. May be involved in polycystin signaling. The chain is ATP synthase subunit beta, mitochondrial from Caenorhabditis elegans.